The primary structure comprises 337 residues: Dolichyl-phosphate beta-glucosyltransferase ALG5C (337 aa).

The Lumenal segment spans residues 1–6 (MNDLPP). A helical membrane pass occupies residues 7–27 (IANLISNILFVLLIITFLYAL). Topologically, residues 28-337 (CSRFVSDKTL…ADTPISDFEV (310 aa)) are cytoplasmic.

The protein belongs to the glycosyltransferase 2 family.

The protein localises to the endoplasmic reticulum membrane. It catalyses the reaction a di-trans,poly-cis-dolichyl phosphate + UDP-alpha-D-glucose = a di-trans,poly-cis-dolichyl beta-D-glucosyl phosphate + UDP. The protein operates within protein modification; protein glycosylation. Functionally, dolichyl-phosphate beta-glucosyltransferase involved in the glycosylation of glycoproteins through the synthesis of dolichyl beta-D-glucosyl phosphate which serves as a sugar donor for transfer of three glucose residues to the Man-9-GlcNAc-2-PP-dolichol precursor to N-glycans. This chain is Dolichyl-phosphate beta-glucosyltransferase ALG5C, found in Trichomonas vaginalis (strain ATCC PRA-98 / G3).